Reading from the N-terminus, the 379-residue chain is Flagellin A (379 aa).

2 coiled-coil regions span residues 103–128 (TNSASERQALDEESTALQDELNRIAE) and 302–341 (YVDSQRAELGAKQNRLSHSINNLANIQENVEASNSRIKDT).

Belongs to the bacterial flagellin family. As to quaternary structure, heteromer of multiple flagellin subunits including FlaA, FlaB, FlaC, FlaD and possibly FlaE.

Its subcellular location is the secreted. It localises to the bacterial flagellum. In terms of biological role, flagellin is the subunit protein which polymerizes to form the filaments of bacterial flagella. FlaA is essential for flagellar synthesis and full motility. Important for virulence at two different levels: is needed for crossing the fish integument and may play a role once the bacterium has entered the host. The protein is Flagellin A (flaA) of Vibrio anguillarum (Listonella anguillarum).